We begin with the raw amino-acid sequence, 336 residues long: Anthranilate phosphoribosyltransferase (336 aa).

Residues Gly79, 82–83 (GD), Thr87, 89–92 (NIST), 107–115 (KHGNRAMSS), and Ser119 each bind 5-phospho-alpha-D-ribose 1-diphosphate. Gly79 serves as a coordination point for anthranilate. Ser91 is a Mg(2+) binding site. Asn110 is an anthranilate binding site. An anthranilate-binding site is contributed by Arg165. 2 residues coordinate Mg(2+): Asp225 and Glu226.

Belongs to the anthranilate phosphoribosyltransferase family. As to quaternary structure, homodimer. It depends on Mg(2+) as a cofactor.

The enzyme catalyses N-(5-phospho-beta-D-ribosyl)anthranilate + diphosphate = 5-phospho-alpha-D-ribose 1-diphosphate + anthranilate. Its pathway is amino-acid biosynthesis; L-tryptophan biosynthesis; L-tryptophan from chorismate: step 2/5. In terms of biological role, catalyzes the transfer of the phosphoribosyl group of 5-phosphorylribose-1-pyrophosphate (PRPP) to anthranilate to yield N-(5'-phosphoribosyl)-anthranilate (PRA). This chain is Anthranilate phosphoribosyltransferase, found in Dictyoglomus turgidum (strain DSM 6724 / Z-1310).